Reading from the N-terminus, the 198-residue chain is Beta-crystallin A1 (198 aa).

Residues 1-13 (MAQINPLPVPLGP) are N-terminal arm. 2 consecutive Beta/gamma crystallin 'Greek key' domains span residues 14-53 (WKIT…KVEC) and 54-100 (GGWI…RPIC). The connecting peptide stretch occupies residues 101 to 106 (SANHKE). Beta/gamma crystallin 'Greek key' domains lie at 107–148 (SKLV…KVQC) and 149–197 (GSWV…RRIQ).

This sequence belongs to the beta/gamma-crystallin family. As to quaternary structure, homo/heterodimer, or complexes of higher-order. The structure of beta-crystallin oligomers seems to be stabilized through interactions between the N-terminal arms.

Functionally, crystallins are the dominant structural components of the vertebrate eye lens. The polypeptide is Beta-crystallin A1 (Rana temporaria (European common frog)).